We begin with the raw amino-acid sequence, 254 residues long: 7-cyano-7-deazaguanine synthase (254 aa).

30-40 (YSGGQDSATCL) contributes to the ATP binding site. Positions 218, 233, 236, and 239 each coordinate Zn(2+).

Belongs to the QueC family. Zn(2+) is required as a cofactor.

The enzyme catalyses 7-carboxy-7-deazaguanine + NH4(+) + ATP = 7-cyano-7-deazaguanine + ADP + phosphate + H2O + H(+). Its pathway is purine metabolism; 7-cyano-7-deazaguanine biosynthesis. In terms of biological role, catalyzes the ATP-dependent conversion of 7-carboxy-7-deazaguanine (CDG) to 7-cyano-7-deazaguanine (preQ(0)). This is 7-cyano-7-deazaguanine synthase from Zymomonas mobilis subsp. mobilis (strain ATCC 31821 / ZM4 / CP4).